A 296-amino-acid polypeptide reads, in one-letter code: Peptide transport system permease protein SapC (296 aa).

The Cytoplasmic segment spans residues 1-28 (MPYDSVYSEKRPPGTLRTAWRKFYSDAP). The chain crosses the membrane as a helical span at residues 29–49 (AMVGLYGCAGLALLCIFGGWI). Over 50–98 (APYGIDQQFLGYQLLPPSWSRYGEVSFFLGTDDLGRDVLSRLLSGAAPT) the chain is Periplasmic. A helical membrane pass occupies residues 99 to 119 (VGGAFIVTLAATLCGLVLGVV). Residues 99 to 284 (VGGAFIVTLA…LSVLLVNLLG (186 aa)) enclose the ABC transmembrane type-1 domain. The Cytoplasmic segment spans residues 120–133 (AGATHGLRSAVLNH). Residues 134 to 154 (ILDTLLSIPSLLLAIIVVAFA) traverse the membrane as a helical segment. Residues 155-196 (GPHLSHAMFAVWLALLPRMVRSVYSMVHDELEKEYVIAARLD) lie on the Periplasmic side of the membrane. A helical membrane pass occupies residues 197-217 (GATTLNILWFAILPNITAGLV). Topologically, residues 218 to 222 (TEITR) are cytoplasmic. The chain crosses the membrane as a helical span at residues 223–243 (ALSMAILDIAALGFLDLGAQL). Residues 244–257 (PSPEWGAMLGDALE) are Periplasmic-facing. A helical membrane pass occupies residues 258-278 (LIYVAPWTVMLPGAAITLSVL). The Cytoplasmic portion of the chain corresponds to 279-296 (LVNLLGDGIRRAIIAGVE).

The protein belongs to the binding-protein-dependent transport system permease family. OppBC subfamily.

It is found in the cell inner membrane. In terms of biological role, involved in a peptide intake transport system that plays a role in the resistance to antimicrobial peptides. This chain is Peptide transport system permease protein SapC (sapC), found in Salmonella typhi.